We begin with the raw amino-acid sequence, 579 residues long: Arginine--tRNA ligase (579 aa).

A 'HIGH' region motif is present at residues 128-138 (PNLAKEMHVGH).

The protein belongs to the class-I aminoacyl-tRNA synthetase family. As to quaternary structure, monomer.

Its subcellular location is the cytoplasm. The catalysed reaction is tRNA(Arg) + L-arginine + ATP = L-arginyl-tRNA(Arg) + AMP + diphosphate. The protein is Arginine--tRNA ligase of Pseudomonas syringae pv. syringae (strain B728a).